Consider the following 391-residue polypeptide: Elongation factor Tu (391 aa).

A tr-type G domain is found at 10–201 (KPHVNIGTIG…EVDKYIPTPE (192 aa)). Positions 19–26 (GHVDHGKT) are G1. Residue 19–26 (GHVDHGKT) coordinates GTP. Residue Thr26 coordinates Mg(2+). The segment at 55-59 (GITIS) is G2. The segment at 76–79 (DCPG) is G3. Residues 76-80 (DCPGH) and 131-134 (NKVD) contribute to the GTP site. The tract at residues 131 to 134 (NKVD) is G4. The segment at 169 to 171 (SAL) is G5.

This sequence belongs to the TRAFAC class translation factor GTPase superfamily. Classic translation factor GTPase family. EF-Tu/EF-1A subfamily. As to quaternary structure, monomer.

Its subcellular location is the cytoplasm. It carries out the reaction GTP + H2O = GDP + phosphate + H(+). GTP hydrolase that promotes the GTP-dependent binding of aminoacyl-tRNA to the A-site of ribosomes during protein biosynthesis. The chain is Elongation factor Tu from Chelativorans sp. (strain BNC1).